Reading from the N-terminus, the 48-residue chain is uncharacterized protein (48 aa).

The helical transmembrane segment at 18–38 threads the bilayer; the sequence is IIIKYWYIDLTITIFAFLILY.

It is found in the host membrane. This is an uncharacterized protein from Acidianus bottle-shaped virus (isolate Italy/Pozzuoli) (ABV).